The following is a 352-amino-acid chain: MKAIIVHPPGAGVSIEDVNINGNGPGIKILENGICGTDREIVNGELSAATSLNGFLVLGHEALGILEEDTKNLRKGDLVMPINRRGCGRCLNCMLGRPDFCETGEQLEAGISGMHGFMREYINDDERYLVKVPDVIRDIAIMAQPLADLEKSIEEMISIQKRLHWPCIDGTYNCRKVLITGTGTIGILFAMLLKTYGFSVYISNKREPNDIESKIFDELSVKYKNLSNKIDESFDAIIEASGSGTDVIERTLPLLKNNGFYGIFGFEKTGTLNLTSEFLQGIVYKSINITGLINGQKPHMEMAMNHLIQWKKQFPKTTSMMITEKVSINNERRLKEVLSKKRPGEIKIKIIW.

Cysteine 35 is a Zn(2+) binding site. Threonine 37 contacts substrate. Zn(2+) is bound by residues histidine 60 and glutamate 61. Position 83 (asparagine 83) interacts with substrate. Positions 87, 90, 93, and 101 each coordinate Zn(2+). Substrate is bound by residues glutamate 108, glutamine 144, and aspartate 148. Residue glutamine 144 coordinates Zn(2+). NADP(+) contacts are provided by residues 182–185, 204–206, 264–266, 292–294, and lysine 341; these read TGTI, NKR, FGF, and LIN. Asparagine 294 provides a ligand contact to substrate.

Belongs to the zinc-containing alcohol dehydrogenase family. Glucose 1-dehydrogenase subfamily. Zn(2+) is required as a cofactor.

It catalyses the reaction D-glucose + NAD(+) = D-glucono-1,5-lactone + NADH + H(+). The enzyme catalyses D-glucose + NADP(+) = D-glucono-1,5-lactone + NADPH + H(+). Catalyzes the NAD(P)(+)-dependent oxidation of D-glucose to D-gluconate via gluconolactone. Can utilize both NAD(+) and NADP(+) as electron acceptor. Is involved in the degradation of glucose through a non-phosphorylative variant of the Entner-Doudoroff pathway. This Picrophilus torridus (strain ATCC 700027 / DSM 9790 / JCM 10055 / NBRC 100828 / KAW 2/3) protein is Glucose 1-dehydrogenase 1.